Here is a 366-residue protein sequence, read N- to C-terminus: Anhydro-N-acetylmuramic acid kinase (366 aa).

Residue 12-19 participates in ATP binding; the sequence is GTSMDGAD.

This sequence belongs to the anhydro-N-acetylmuramic acid kinase family.

The enzyme catalyses 1,6-anhydro-N-acetyl-beta-muramate + ATP + H2O = N-acetyl-D-muramate 6-phosphate + ADP + H(+). The protein operates within amino-sugar metabolism; 1,6-anhydro-N-acetylmuramate degradation. It functions in the pathway cell wall biogenesis; peptidoglycan recycling. Functionally, catalyzes the specific phosphorylation of 1,6-anhydro-N-acetylmuramic acid (anhMurNAc) with the simultaneous cleavage of the 1,6-anhydro ring, generating MurNAc-6-P. Is required for the utilization of anhMurNAc either imported from the medium or derived from its own cell wall murein, and thus plays a role in cell wall recycling. This is Anhydro-N-acetylmuramic acid kinase from Neisseria meningitidis serogroup C (strain 053442).